Reading from the N-terminus, the 607-residue chain is Chaperone protein DnaK (607 aa).

Threonine 174 carries the phosphothreonine; by autocatalysis modification. Positions 577 to 607 are disordered; that stretch reads GYTASGPQGGPNPGGGQSGPDGNVNTDYKVY. Gly residues predominate over residues 583 to 595; sequence PQGGPNPGGGQSG.

This sequence belongs to the heat shock protein 70 family.

In terms of biological role, acts as a chaperone. In Caldicellulosiruptor bescii (strain ATCC BAA-1888 / DSM 6725 / KCTC 15123 / Z-1320) (Anaerocellum thermophilum), this protein is Chaperone protein DnaK.